The primary structure comprises 398 residues: Ras-related GTP-binding protein C (398 aa).

Positions 1 to 56 are disordered; sequence MSLQYGAEETPLAGSYGAADSFPKDFGYGVEEEEEEAAAGGGGGAGAGGGCGPGGA. S2 carries the N-acetylserine modification. A phosphoserine mark is found at S2 and S15. Residues 39–55 are compositionally biased toward gly residues; the sequence is AGGGGGAGAGGGCGPGG. The GDP site is built by R70, S71, G72, K73, S74, and S75. K73 is a GTP binding site. Residues T89 and T95 each coordinate GTP. Position 95 is a phosphothreonine (T95). Positions 177, 178, 180, and 219 each coordinate GDP. D180 is a binding site for GTP.

It belongs to the GTR/RAG GTP-binding protein family. As to quaternary structure, forms a heterodimer with RRAGA, in a sequence-independent manner, and RRAGB. Heterodimerization stabilizes proteins of the heterodimer. The GDP-bound form of RRAGC (in complex with the GTP-bound form of RRAGA or RRAGB), interacts with RPTOR, thereby promoting recruitment of mTORC1 to the lysosomes. Component of the lysosomal folliculin complex (LFC), composed of FLCN, FNIP1 (or FNIP2), RagA/RRAGA or RagB/RRAGB GDP-bound, RagC/RRAGC or RagD/RRAGD GTP-bound, and Ragulator. Interacts with NOL8. Interacts with SH3BP4; the interaction with this negative regulator is most probably direct, preferentially occurs with the inactive GDP-bound form of RRAGB, is negatively regulated by amino acids and prevents interaction with RPTOR. The Rag heterodimer interacts with SLC38A9; the probable amino acid sensor. Interacts with SESN1, SESN2 and SESN3. Interacts with PIP4P1. The GDP-bound form interacts with TFEB. The GDP-bound form interacts with TFE3. In terms of tissue distribution, expressed most abundantly in kidney. Moderately expressed in brain, ovary, and testis, and detected at lower levels in heart, liver, and muscle. Not detected in lung, spleen, and small intestine. Widely expressed in tumor cells, with expression being specifically up-regulated in highly metastatic cells.

It localises to the cytoplasm. The protein localises to the nucleus. It is found in the lysosome membrane. It carries out the reaction GTP + H2O = GDP + phosphate + H(+). The activation of RagC/RRAGC is mediated by a GTPase activating protein (GAP). In high-amino acid conditions, activated by GTPase activating protein FLCN that stimulates RRAGC GTPase activity to turn it into its active GDP-bound form. In response to amino acid depletion, the GATOR1 complex inactivates RagC/RRAGC by securing the GTP-bound inactive form. Functionally, guanine nucleotide-binding protein that plays a crucial role in the cellular response to amino acid availability through regulation of the mTORC1 signaling cascade. Forms heterodimeric Rag complexes with RagA/RRAGA or RagB/RRAGB and cycles between an inactive GTP-bound and an active GDP-bound form: RagC/RRAGC is in its active form when GDP-bound RagC/RRAGC forms a complex with GTP-bound RagA/RRAGA (or RagB/RRAGB) and in an inactive form when GTP-bound RagC/RRAGC heterodimerizes with GDP-bound RagA/RRAGA (or RagB/RRAGB). In its GDP-bound active form, promotes the recruitment of mTORC1 to the lysosomes and its subsequent activation by the GTPase RHEB. This is a crucial step in the activation of the MTOR signaling cascade by amino acids. Also plays a central role in the non-canonical mTORC1 complex, which acts independently of RHEB and specifically mediates phosphorylation of MiT/TFE factors TFEB and TFE3: GDP-bound RagC/RRAGC mediates recruitment of MiT/TFE factors TFEB and TFE3. This is Ras-related GTP-binding protein C from Mus musculus (Mouse).